Consider the following 448-residue polypeptide: Phosphoglucosamine mutase (448 aa).

Ser99 serves as the catalytic Phosphoserine intermediate. 4 residues coordinate Mg(2+): Ser99, Asp238, Asp240, and Asp242. Ser99 carries the phosphoserine modification.

The protein belongs to the phosphohexose mutase family. Mg(2+) is required as a cofactor. Activated by phosphorylation.

The catalysed reaction is alpha-D-glucosamine 1-phosphate = D-glucosamine 6-phosphate. Its function is as follows. Catalyzes the conversion of glucosamine-6-phosphate to glucosamine-1-phosphate. The polypeptide is Phosphoglucosamine mutase (Marinomonas sp. (strain MWYL1)).